Consider the following 409-residue polypeptide: SPI-1 type 3 secretion system translocon protein SctB (409 aa).

A helical transmembrane segment spans residues 119 to 140 (ISGMSSSAVALLAAANTLMLTL). Polar residues predominate over residues 350–368 (ERSEQQISQVNNRVASTAS). Positions 350–378 (ERSEQQISQVNNRVASTASDEARESSRKS) are disordered.

The protein belongs to the SctB/SipC family. As to quaternary structure, the core secretion machinery of the T3SS is composed of approximately 20 different proteins, including cytoplasmic components, a base, an export apparatus and a needle. This subunit is involved in the formation of a pore, called the translocon, in host membrane.

It is found in the secreted. The protein resides in the host membrane. Functionally, component of the type III secretion system 1 (SPI-1 T3SS), also called injectisome, which is used to inject bacterial effector proteins into eukaryotic host cells. SipB/SctE1 and SipC/SctB1 are inserted into the host membrane where they form a pore and allow the translocation of effector proteins into the cytosol of target cells. The sequence is that of SPI-1 type 3 secretion system translocon protein SctB from Salmonella typhi.